Here is a 152-residue protein sequence, read N- to C-terminus: MDASTKTTKKGAGGRKGGGPRKKSVTRSIRAGLQFPVGRIGRYLKKGRYAQRVGTGAPVYLAAVLEYLAAEVLELAGNAARDNKKNRIIPRHLLLAVRNDEELGKLLAGVTIAHGGVLPNINPILLPKKTERANTGGKEPKTTKAGKSPKKA.

2 disordered regions span residues 1-25 (MDAS…KKSV) and 129-152 (KTER…PKKA). The span at 7 to 25 (TTKKGAGGRKGGGPRKKSV) shows a compositional bias: basic residues. Basic and acidic residues predominate over residues 129–142 (KTERANTGGKEPKT). The short motif at 148–151 (SPKK) is the SPKK motif element.

The protein belongs to the histone H2A family. As to quaternary structure, the nucleosome is a histone octamer containing two molecules each of H2A, H2B, H3 and H4 assembled in one H3-H4 heterotetramer and two H2A-H2B heterodimers. The octamer wraps approximately 147 bp of DNA.

It is found in the nucleus. Its subcellular location is the chromosome. Functionally, core component of nucleosome. Nucleosomes wrap and compact DNA into chromatin, limiting DNA accessibility to the cellular machineries which require DNA as a template. Histones thereby play a central role in transcription regulation, DNA repair, DNA replication and chromosomal stability. DNA accessibility is regulated via a complex set of post-translational modifications of histones, also called histone code, and nucleosome remodeling. This is Probable histone H2A.3 from Medicago truncatula (Barrel medic).